The sequence spans 199 residues: Large ribosomal subunit protein bL25 (199 aa).

This sequence belongs to the bacterial ribosomal protein bL25 family. CTC subfamily. In terms of assembly, part of the 50S ribosomal subunit; part of the 5S rRNA/L5/L18/L25 subcomplex. Contacts the 5S rRNA. Binds to the 5S rRNA independently of L5 and L18.

In terms of biological role, this is one of the proteins that binds to the 5S RNA in the ribosome where it forms part of the central protuberance. In Herpetosiphon aurantiacus (strain ATCC 23779 / DSM 785 / 114-95), this protein is Large ribosomal subunit protein bL25.